Here is a 437-residue protein sequence, read N- to C-terminus: Chaperone SurA (437 aa).

The first 27 residues, 1 to 27 (MHNHVFKTIARHGLIALFFFFSISAMA), serve as a signal peptide directing secretion. PpiC domains lie at 179–280 (QDEF…KLLN) and 290–388 (VDQT…QVLE).

It localises to the periplasm. The catalysed reaction is [protein]-peptidylproline (omega=180) = [protein]-peptidylproline (omega=0). Its function is as follows. Chaperone involved in the correct folding and assembly of outer membrane proteins. Recognizes specific patterns of aromatic residues and the orientation of their side chains, which are found more frequently in integral outer membrane proteins. May act in both early periplasmic and late outer membrane-associated steps of protein maturation. The sequence is that of Chaperone SurA from Methylobacillus flagellatus (strain ATCC 51484 / DSM 6875 / VKM B-1610 / KT).